We begin with the raw amino-acid sequence, 1111 residues long: RecBCD enzyme subunit RecC (1111 aa).

It belongs to the RecC family. Heterotrimer of RecB, RecC and RecD. All subunits contribute to DNA-binding.

A helicase/nuclease that prepares dsDNA breaks (DSB) for recombinational DNA repair. Binds to DSBs and unwinds DNA via a highly rapid and processive ATP-dependent bidirectional helicase activity. Unwinds dsDNA until it encounters a Chi (crossover hotspot instigator) sequence from the 3' direction. Cuts ssDNA a few nucleotides 3' to the Chi site. The properties and activities of the enzyme are changed at Chi. The Chi-altered holoenzyme produces a long 3'-ssDNA overhang and facilitates RecA-binding to the ssDNA for homologous DNA recombination and repair. Holoenzyme degrades any linearized DNA that is unable to undergo homologous recombination. In the holoenzyme this subunit recognizes the wild-type Chi sequence, and when added to isolated RecB increases its ATP-dependent helicase processivity. This is RecBCD enzyme subunit RecC from Buchnera aphidicola subsp. Baizongia pistaciae (strain Bp).